A 472-amino-acid polypeptide reads, in one-letter code: ATP-dependent protease ATPase subunit HslU (472 aa).

ATP-binding positions include isoleucine 20, 62-67, aspartate 285, glutamate 350, and arginine 422; that span reads GVGKTE.

Belongs to the ClpX chaperone family. HslU subfamily. As to quaternary structure, a double ring-shaped homohexamer of HslV is capped on each side by a ring-shaped HslU homohexamer. The assembly of the HslU/HslV complex is dependent on binding of ATP.

Its subcellular location is the cytoplasm. Functionally, ATPase subunit of a proteasome-like degradation complex; this subunit has chaperone activity. The binding of ATP and its subsequent hydrolysis by HslU are essential for unfolding of protein substrates subsequently hydrolyzed by HslV. HslU recognizes the N-terminal part of its protein substrates and unfolds these before they are guided to HslV for hydrolysis. This Lactiplantibacillus plantarum (strain ATCC BAA-793 / NCIMB 8826 / WCFS1) (Lactobacillus plantarum) protein is ATP-dependent protease ATPase subunit HslU.